The primary structure comprises 460 residues: Chromosomal replication initiator protein DnaA (460 aa).

Positions 1 to 84 (MAVSLWQQCI…RFDIGSRPSA (84 aa)) are domain I, interacts with DnaA modulators. Positions 84–123 (AKKPEPAPVAAVRVPNPQTKASVGTSFNTTEPVANANHRS) are domain II. The domain III, AAA+ region stretch occupies residues 124–340 (NINPTYQFDN…GALNRVIANA (217 aa)). ATP-binding residues include Gly168, Gly170, Lys171, and Thr172. The domain IV, binds dsDNA stretch occupies residues 341–460 (NFTGRPITID…YANLIRTLSS (120 aa)).

This sequence belongs to the DnaA family. Oligomerizes as a right-handed, spiral filament on DNA at oriC.

Its subcellular location is the cytoplasm. Functionally, plays an essential role in the initiation and regulation of chromosomal replication. ATP-DnaA binds to the origin of replication (oriC) to initiate formation of the DNA replication initiation complex once per cell cycle. Binds the DnaA box (a 9 base pair repeat at the origin) and separates the double-stranded (ds)DNA. Forms a right-handed helical filament on oriC DNA; dsDNA binds to the exterior of the filament while single-stranded (ss)DNA is stabiized in the filament's interior. The ATP-DnaA-oriC complex binds and stabilizes one strand of the AT-rich DNA unwinding element (DUE), permitting loading of DNA polymerase. After initiation quickly degrades to an ADP-DnaA complex that is not apt for DNA replication. Binds acidic phospholipids. This chain is Chromosomal replication initiator protein DnaA, found in Shewanella sp. (strain ANA-3).